A 101-amino-acid chain; its full sequence is U1-sicaritoxin-Li1a (101 aa).

The signal sequence occupies residues 1-19; the sequence is MRFLVGAVLVVVLVACATA. Residues 20–35 constitute a propeptide that is removed on maturation; the sequence is FESDAETFKSLVVEER. Intrachain disulfides connect cysteine 37/cysteine 54, cysteine 45/cysteine 59, cysteine 53/cysteine 72, and cysteine 61/cysteine 70. Position 81 is a lysine amide (lysine 81). The propeptide occupies 85 to 101; it reads ALLLPVETHRLLFPEQW.

This sequence belongs to the neurotoxin 28 (Litx) family. In terms of tissue distribution, expressed by the venom gland.

Its subcellular location is the secreted. Toxin active against insects (S.frugiperda larvae). May act on sodium (Nav) or calcium channels (Cav). This Loxosceles intermedia (Brown spider) protein is U1-sicaritoxin-Li1a.